Reading from the N-terminus, the 435-residue chain is Eukaryotic peptide chain release factor subunit 1 (435 aa).

Belongs to the eukaryotic release factor 1 family. Heterodimer of two subunits, one of which binds GTP.

The protein localises to the cytoplasm. In terms of biological role, directs the termination of nascent peptide synthesis (translation) in response to the termination codons UAA, UAG and UGA. This is Eukaryotic peptide chain release factor subunit 1 (SU2) from Podospora anserina (Pleurage anserina).